The following is a 594-amino-acid chain: UvrABC system protein C (594 aa).

In terms of domain architecture, GIY-YIG spans 13 to 99 (NSSGVYQYFD…IKQLKPKYNI (87 aa)). The UVR domain maps to 205 to 240 (DRLIKELELKMERLSSKLRFEEALIYRDRIAKIQKI).

The protein belongs to the UvrC family. Interacts with UvrB in an incision complex.

The protein resides in the cytoplasm. The UvrABC repair system catalyzes the recognition and processing of DNA lesions. UvrC both incises the 5' and 3' sides of the lesion. The N-terminal half is responsible for the 3' incision and the C-terminal half is responsible for the 5' incision. In Helicobacter pylori (strain P12), this protein is UvrABC system protein C.